The primary structure comprises 368 residues: Putative J domain-containing protein R445 (368 aa).

Positions 13–83 (DLYKILGLTN…KQRNEYNQRL (71 aa)) constitute a J domain.

The sequence is that of Putative J domain-containing protein R445 from Acanthamoeba polyphaga mimivirus (APMV).